Reading from the N-terminus, the 384-residue chain is S-adenosylmethionine synthase (384 aa).

Histidine 15 is a binding site for ATP. Aspartate 17 is a Mg(2+) binding site. Glutamate 43 provides a ligand contact to K(+). Positions 56 and 99 each coordinate L-methionine. Residues 99-109 (QSPDINQGVDR) form a flexible loop region. Residues 164-166 (DAK), 230-231 (RF), aspartate 239, 245-246 (RK), alanine 262, and lysine 266 each bind ATP. Residue aspartate 239 participates in L-methionine binding. Lysine 270 contributes to the L-methionine binding site.

Belongs to the AdoMet synthase family. As to quaternary structure, homotetramer; dimer of dimers. The cofactor is Mg(2+). Requires K(+) as cofactor.

It localises to the cytoplasm. The catalysed reaction is L-methionine + ATP + H2O = S-adenosyl-L-methionine + phosphate + diphosphate. It functions in the pathway amino-acid biosynthesis; S-adenosyl-L-methionine biosynthesis; S-adenosyl-L-methionine from L-methionine: step 1/1. In terms of biological role, catalyzes the formation of S-adenosylmethionine (AdoMet) from methionine and ATP. The overall synthetic reaction is composed of two sequential steps, AdoMet formation and the subsequent tripolyphosphate hydrolysis which occurs prior to release of AdoMet from the enzyme. The polypeptide is S-adenosylmethionine synthase (Salmonella gallinarum (strain 287/91 / NCTC 13346)).